Consider the following 113-residue polypeptide: T cell receptor alpha variable 5 (113 aa).

An N-terminal signal peptide occupies residues 1 to 22; the sequence is MKTFAGFSFLFLWLQLDCMSRG. An Ig-like domain is found at 23 to 113; that stretch reads EDVEQSLFLS…DSAIYFCAES (91 aa). The N-linked (GlcNAc...) asparagine glycan is linked to Asn42. Cys43 and Cys110 form a disulfide bridge.

In terms of assembly, alpha-beta TR is a heterodimer composed of an alpha and beta chain; disulfide-linked. The alpha-beta TR is associated with the transmembrane signaling CD3 coreceptor proteins to form the TR-CD3 (TcR or TCR). The assembly of alpha-beta TR heterodimers with CD3 occurs in the endoplasmic reticulum where a single alpha-beta TR heterodimer associates with one CD3D-CD3E heterodimer, one CD3G-CD3E heterodimer and one CD247 homodimer forming a stable octameric structure. CD3D-CD3E and CD3G-CD3E heterodimers preferentially associate with TR alpha and TR beta chains, respectively. The association of the CD247 homodimer is the last step of TcR assembly in the endoplasmic reticulum and is required for transport to the cell surface.

The protein localises to the cell membrane. In terms of biological role, v region of the variable domain of T cell receptor (TR) alpha chain that participates in the antigen recognition. Alpha-beta T cell receptors are antigen specific receptors which are essential to the immune response and are present on the cell surface of T lymphocytes. Recognize peptide-major histocompatibility (MH) (pMH) complexes that are displayed by antigen presenting cells (APC), a prerequisite for efficient T cell adaptive immunity against pathogens. Binding of alpha-beta TR to pMH complex initiates TR-CD3 clustering on the cell surface and intracellular activation of LCK that phosphorylates the ITAM motifs of CD3G, CD3D, CD3E and CD247 enabling the recruitment of ZAP70. In turn ZAP70 phosphorylates LAT, which recruits numerous signaling molecules to form the LAT signalosome. The LAT signalosome propagates signal branching to three major signaling pathways, the calcium, the mitogen-activated protein kinase (MAPK) kinase and the nuclear factor NF-kappa-B (NF-kB) pathways, leading to the mobilization of transcription factors that are critical for gene expression and essential for T cell growth and differentiation. The T cell repertoire is generated in the thymus, by V-(D)-J rearrangement. This repertoire is then shaped by intrathymic selection events to generate a peripheral T cell pool of self-MH restricted, non-autoaggressive T cells. Post-thymic interaction of alpha-beta TR with the pMH complexes shapes TR structural and functional avidity. The chain is T cell receptor alpha variable 5 from Homo sapiens (Human).